The following is a 968-amino-acid chain: RNA polymerase-associated protein RapA (968 aa).

In terms of domain architecture, Helicase ATP-binding spans 164 to 334 (DVGRRHAPRV…FARLRLLDPN (171 aa)). 177–184 (DEVGLGKT) provides a ligand contact to ATP. Positions 280-283 (DEAH) match the DEAH box motif. In terms of domain architecture, Helicase C-terminal spans 490–685 (RVEWLMGYLT…ALKAQLEQGR (196 aa)).

It belongs to the SNF2/RAD54 helicase family. RapA subfamily. As to quaternary structure, interacts with the RNAP. Has a higher affinity for the core RNAP than for the holoenzyme. Its ATPase activity is stimulated by binding to RNAP.

Transcription regulator that activates transcription by stimulating RNA polymerase (RNAP) recycling in case of stress conditions such as supercoiled DNA or high salt concentrations. Probably acts by releasing the RNAP, when it is trapped or immobilized on tightly supercoiled DNA. Does not activate transcription on linear DNA. Probably not involved in DNA repair. The sequence is that of RNA polymerase-associated protein RapA from Salmonella choleraesuis (strain SC-B67).